The sequence spans 400 residues: Deoxyguanosinetriphosphate triphosphohydrolase-like protein (400 aa).

Positions 73-215 constitute an HD domain; the sequence is RLTHSIEVSQ…AAIADDIAYN (143 aa).

The protein belongs to the dGTPase family. Type 2 subfamily.

The polypeptide is Deoxyguanosinetriphosphate triphosphohydrolase-like protein (Bartonella quintana (strain Toulouse) (Rochalimaea quintana)).